A 355-amino-acid polypeptide reads, in one-letter code: 3-isopropylmalate dehydrogenase (355 aa).

Arg90, Arg100, Arg128, and Asp222 together coordinate substrate. Mg(2+)-binding residues include Asp222, Asp246, and Asp250. 280–292 (GSAPDIAGKGVAN) serves as a coordination point for NAD(+).

It belongs to the isocitrate and isopropylmalate dehydrogenases family. LeuB type 1 subfamily. As to quaternary structure, homodimer. Requires Mg(2+) as cofactor. Mn(2+) is required as a cofactor.

Its subcellular location is the cytoplasm. It carries out the reaction (2R,3S)-3-isopropylmalate + NAD(+) = 4-methyl-2-oxopentanoate + CO2 + NADH. Its pathway is amino-acid biosynthesis; L-leucine biosynthesis; L-leucine from 3-methyl-2-oxobutanoate: step 3/4. Functionally, catalyzes the oxidation of 3-carboxy-2-hydroxy-4-methylpentanoate (3-isopropylmalate) to 3-carboxy-4-methyl-2-oxopentanoate. The product decarboxylates to 4-methyl-2 oxopentanoate. The chain is 3-isopropylmalate dehydrogenase from Cupriavidus metallidurans (strain ATCC 43123 / DSM 2839 / NBRC 102507 / CH34) (Ralstonia metallidurans).